Consider the following 698-residue polypeptide: MAPPGVGVGVAYLWGKGRGGRKGTPVVVTMESPNYSVVEVDGPDAEAELRTAAVAMDKGGGRGRSRSRTARQLTWVLLLRARRAAGRLASFAAAAARRFRRSPADAADELGRGRGRLMYGFIRGFLALSLLALAVELAAYWNGWRLRRPELHVPEAVEIEGWAHSAYISWMSFRADYIRRPIEFLSKACILLFVIQSMDRLVLCLGCFWIKLRKIKPRIEGDPFREGSGYQHPMVLVQIPMCNEKEVYEQSISAACQLDWPREKFLIQVLDDSSDESIQLLIKAEVSKWSHQGVNIVYRHRVLRTGYKAGNLKSAMSCDYVKDYEFVAIFDADFQPTPDFLKKTIPHFEGNPELGLVQARWSFVNKDENLLTRLQNINLCFHFEVEQQVNGVFLNFFGFNGTAGVWRIQALEESGGWLERTTVEDMDIAVRAHLNGWKFIFLNDVKVLCELPESYEAYRKQQHRWHSGPMHLFRLCLPDILTAKISSWKKANLILLFFLLRKLILPFYSFTLFCVILPLTMFVPEAELPVWVICYVPVCMSFLNILPSPRSFPFIVPYLLFENTMSVTKFNAMVSGLFKLGSSYEWIVTKKSGRSSESDLSTAAERDTKDLTLPRLQKQISESELIELKMQKERQEKAPLGAKKANKVYKKELALSLLLLTAATRSLLSAQGIHFYFLLFQGVSFLFVGLDLIGEQID.

2 helical membrane-spanning segments follow: residues 124 to 144 (GFLA…WNGW) and 190 to 210 (ILLF…CFWI). D272 is an active-site residue. Substrate contacts are provided by D331 and D333. Residue D425 is part of the active site. A run of 4 helical transmembrane segments spans residues 503–523 (LILP…TMFV), 528–548 (LPVW…ILPS), 653–668 (LALS…RSLL), and 673–693 (IHFY…LDLI).

The protein belongs to the glycosyltransferase 2 family. Plant cellulose synthase-like C subfamily.

The protein localises to the golgi apparatus membrane. Probable beta-1,4-glucan synthase rather involved in the synthesis of the xyloglucan backbone than cellulose. Seems to work simultaneously with xyloglucan 6-xylosyltransferase. Xyloglucan is a noncellulosic polysaccharides of plant cell wall and consists of a glucan backbone substituted by xylose, galactose and fucose. The polypeptide is Probable xyloglucan glycosyltransferase 2 (CSLC2) (Oryza sativa subsp. japonica (Rice)).